A 73-amino-acid chain; its full sequence is Putative sodium channel toxin Ts39 (73 aa).

The first 22 residues, 1–22 (MKTLNFCLFLVIISSLTVRVFC), serve as a signal peptide directing secretion. The 50-residue stretch at 24-73 (NDRFLTVNDNYVICLYINKSFVNCENLCKAYMNAKDGFCRQPHCFCTDVE) folds into the LCN-type CS-alpha/beta domain. Cystine bridges form between Cys37–Cys62, Cys47–Cys67, and Cys51–Cys69.

This sequence belongs to the long (3 C-C) scorpion toxin superfamily. Sodium channel inhibitor family. In terms of tissue distribution, expressed by the venom gland.

It localises to the secreted. Functionally, putative sodium channel toxin. This Tityus serrulatus (Brazilian scorpion) protein is Putative sodium channel toxin Ts39.